A 443-amino-acid polypeptide reads, in one-letter code: MKGIRRNLQKSYLKRCSEMYLRGLKVSGEIVSAKGIYLEAILPFANIGNEVEIQSNSRRIRGEVIGFSGDKVLVMPYEPVFGLRKGDKVLLKNELVSTKTGNGVVGKVVDPFGNPLDGGFIGFVEEKGLELPQINPLYRERIREVFDTGVRSVNALFTLGKGQKIGIFAGAGVGKSTLLGMITRHSKADVVVLALIGERGREVKEFLEEVLGEEGLKKSVVVVSTADQSPILKVKGAISAVVHAHHFASQGKDVLLLMDSITRLALAQREIGLAAGEPPTLKGFTPSVFQLLTRIAESCGAFKKGSITGIFTVLVEGDDISLDPIADSLMGVLDGHIILSRKRAVRGLFPAVDPVRSLSRLMPKLVSEEHFMKANFFKEVLSKFEDVEELVRIGLYKGGSNPLVDKVINNLEKVESFFKQKPEEKVNFEESLKALDEIYSLLK.

169–176 lines the ATP pocket; it reads AGAGVGKS.

The protein belongs to the ATPase alpha/beta chains family.

It localises to the cytoplasm. The enzyme catalyses ATP + H2O + 4 H(+)(in) = ADP + phosphate + 5 H(+)(out). In terms of biological role, probable catalytic subunit of a protein translocase for flagellum-specific export, or a proton translocase involved in local circuits at the flagellum. This is Flagellum-specific ATP synthase (fliI) from Aquifex aeolicus (strain VF5).